A 164-amino-acid polypeptide reads, in one-letter code: MESIPISVEGFRRLERELERLKKERPGVILAIKEAREEGDLRENAGYEAARERQGMLEARINYIESRMSRFNVIDLATLGGEQVIFGATVEIEDVDTGDVKKYTLLGPDEAEPSKGSISLLSPVGLALLGKFVGDEIVVDAPRGKINYEIVSIAFHGPIAAADD.

Residues 12–38 adopt a coiled-coil conformation; the sequence is RRLERELERLKKERPGVILAIKEAREE.

The protein belongs to the GreA/GreB family.

Functionally, necessary for efficient RNA polymerase transcription elongation past template-encoded arresting sites. The arresting sites in DNA have the property of trapping a certain fraction of elongating RNA polymerases that pass through, resulting in locked ternary complexes. Cleavage of the nascent transcript by cleavage factors such as GreA or GreB allows the resumption of elongation from the new 3'terminus. GreA releases sequences of 2 to 3 nucleotides. The polypeptide is Transcription elongation factor GreA (Solidesulfovibrio magneticus (strain ATCC 700980 / DSM 13731 / RS-1) (Desulfovibrio magneticus)).